Here is a 342-residue protein sequence, read N- to C-terminus: S-adenosylmethionine:tRNA ribosyltransferase-isomerase (342 aa).

Belongs to the QueA family. As to quaternary structure, monomer.

It localises to the cytoplasm. It catalyses the reaction 7-aminomethyl-7-carbaguanosine(34) in tRNA + S-adenosyl-L-methionine = epoxyqueuosine(34) in tRNA + adenine + L-methionine + 2 H(+). It participates in tRNA modification; tRNA-queuosine biosynthesis. Transfers and isomerizes the ribose moiety from AdoMet to the 7-aminomethyl group of 7-deazaguanine (preQ1-tRNA) to give epoxyqueuosine (oQ-tRNA). The chain is S-adenosylmethionine:tRNA ribosyltransferase-isomerase from Listeria welshimeri serovar 6b (strain ATCC 35897 / DSM 20650 / CCUG 15529 / CIP 8149 / NCTC 11857 / SLCC 5334 / V8).